The chain runs to 107 residues: Age-related maculopathy susceptibility protein 2 (107 aa).

The disordered stretch occupies residues 1–21 (MLRLYPGPMVTEAEGKGGPEM).

In terms of tissue distribution, detected in retina and placenta.

It localises to the cytoplasm. The polypeptide is Age-related maculopathy susceptibility protein 2 (ARMS2) (Homo sapiens (Human)).